The chain runs to 131 residues: Sperm microtubule inner protein 11 (131 aa).

Positions serine 17–glycine 44 are disordered.

As to quaternary structure, microtubule inner protein component of sperm flagellar doublet microtubules. In terms of tissue distribution, expressed in sperm.

The protein resides in the cytoplasm. It is found in the cytoskeleton. The protein localises to the flagellum axoneme. Microtubule inner protein (MIP) part of the dynein-decorated doublet microtubules (DMTs) in flagellum axoneme. May serve to reinforce and thus stabilize the microtubule structure in the sperm flagella. The chain is Sperm microtubule inner protein 11 (SPMIP11) from Bos taurus (Bovine).